Here is a 674-residue protein sequence, read N- to C-terminus: tRNA 5-methylaminomethyl-2-thiouridine biosynthesis bifunctional protein MnmC (674 aa).

A tRNA (mnm(5)s(2)U34)-methyltransferase region spans residues 1 to 246; it reads MFIMSSISHA…KREMIAGSLS (246 aa). The tract at residues 272–674 is FAD-dependent cmnm(5)s(2)U34 oxidoreductase; sequence IGGGIASATL…RKGKALTQKV (403 aa).

It in the N-terminal section; belongs to the methyltransferase superfamily. tRNA (mnm(5)s(2)U34)-methyltransferase family. The protein in the C-terminal section; belongs to the DAO family. FAD serves as cofactor.

The protein resides in the cytoplasm. The enzyme catalyses 5-aminomethyl-2-thiouridine(34) in tRNA + S-adenosyl-L-methionine = 5-methylaminomethyl-2-thiouridine(34) in tRNA + S-adenosyl-L-homocysteine + H(+). In terms of biological role, catalyzes the last two steps in the biosynthesis of 5-methylaminomethyl-2-thiouridine (mnm(5)s(2)U) at the wobble position (U34) in tRNA. Catalyzes the FAD-dependent demodification of cmnm(5)s(2)U34 to nm(5)s(2)U34, followed by the transfer of a methyl group from S-adenosyl-L-methionine to nm(5)s(2)U34, to form mnm(5)s(2)U34. The protein is tRNA 5-methylaminomethyl-2-thiouridine biosynthesis bifunctional protein MnmC of Vibrio cholerae serotype O1 (strain ATCC 39315 / El Tor Inaba N16961).